The chain runs to 398 residues: Succinyl-diaminopimelate desuccinylase (398 aa).

H68 contributes to the Zn(2+) binding site. Residue D70 is part of the active site. Zn(2+) is bound at residue D101. E135 (proton acceptor) is an active-site residue. 3 residues coordinate Zn(2+): E136, E164, and H349.

It belongs to the peptidase M20A family. DapE subfamily. As to quaternary structure, homodimer. Zn(2+) is required as a cofactor. Requires Co(2+) as cofactor.

The catalysed reaction is N-succinyl-(2S,6S)-2,6-diaminopimelate + H2O = (2S,6S)-2,6-diaminopimelate + succinate. Its pathway is amino-acid biosynthesis; L-lysine biosynthesis via DAP pathway; LL-2,6-diaminopimelate from (S)-tetrahydrodipicolinate (succinylase route): step 3/3. Catalyzes the hydrolysis of N-succinyl-L,L-diaminopimelic acid (SDAP), forming succinate and LL-2,6-diaminopimelate (DAP), an intermediate involved in the bacterial biosynthesis of lysine and meso-diaminopimelic acid, an essential component of bacterial cell walls. The chain is Succinyl-diaminopimelate desuccinylase from Wolbachia pipientis wMel.